The chain runs to 122 residues: Double-headed protease inhibitor, submandibular gland (122 aa).

2 consecutive Kazal-like domains span residues 10–70 (GGRK…ECDI) and 71–121 (ECTQ…QCQS). Disulfide bonds link cysteine 16–cysteine 50, cysteine 28–cysteine 47, cysteine 36–cysteine 68, cysteine 72–cysteine 101, cysteine 79–cysteine 98, and cysteine 87–cysteine 119.

It is found in the secreted. This inhibitor is composed of two homologous actively inhibiting halves: one which inhibits trypsin, the other which inhibits elastase. The protein is Double-headed protease inhibitor, submandibular gland of Martes martes (European pine marten).